The sequence spans 208 residues: Outer-membrane lipoprotein carrier protein (208 aa).

A signal peptide spans 1 to 22; it reads MRKTLTALMLSLPLLTPHMAFA.

This sequence belongs to the LolA family. As to quaternary structure, monomer.

The protein resides in the periplasm. Its function is as follows. Participates in the translocation of lipoproteins from the inner membrane to the outer membrane. Only forms a complex with a lipoprotein if the residue after the N-terminal Cys is not an aspartate (The Asp acts as a targeting signal to indicate that the lipoprotein should stay in the inner membrane). The polypeptide is Outer-membrane lipoprotein carrier protein (Shewanella woodyi (strain ATCC 51908 / MS32)).